Reading from the N-terminus, the 902-residue chain is Leucine-rich repeat-containing G-protein coupled receptor 5 (902 aa).

The signal sequence occupies residues methionine 1–alanine 22. Topologically, residues alanine 23 to threonine 558 are extracellular. Disulfide bonds link cysteine 32–cysteine 38 and cysteine 36–cysteine 49. Residues cysteine 32 to leucine 61 form the LRRNT domain. LRR repeat units lie at residues glutamate 41 to leucine 61, serine 62 to asparagine 85, leucine 86 to glycine 109, glycine 111 to asparagine 133, leucine 134 to glycine 157, phenylalanine 159 to serine 181, leucine 182 to asparagine 205, serine 207 to glycine 229, leucine 230 to leucine 253, lysine 254 to glycine 276, proline 278 to histidine 300, proline 302 to threonine 324, threonine 325 to glutamine 347, leucine 348 to arginine 372, glutamine 374 to glutamine 393, leucine 394 to serine 417, and leucine 418 to glycine 441. N-linked (GlcNAc...) asparagine glycosylation is found at asparagine 60 and asparagine 74. Residue asparagine 205 is glycosylated (N-linked (GlcNAc...) asparagine). Cysteines 345 and 370 form a disulfide. Cysteine 476 and cysteine 537 form a disulfide bridge. Residue asparagine 496 is glycosylated (N-linked (GlcNAc...) asparagine). The helical transmembrane segment at glycine 559–phenylalanine 579 threads the bilayer. Over arginine 580–lysine 589 the chain is Cytoplasmic. A helical transmembrane segment spans residues leucine 590 to alanine 610. Residues methionine 598 to asparagine 619 form an LRR 18 repeat. The Extracellular segment spans residues threonine 611–glutamine 634. Cysteines 633 and 708 form a disulfide. A helical membrane pass occupies residues isoleucine 635 to alanine 655. The Cytoplasmic segment spans residues leucine 656–lysine 678. Residues leucine 679–glycine 699 traverse the membrane as a helical segment. Topologically, residues serine 700 to serine 718 are extracellular. The chain crosses the membrane as a helical span at residues methionine 719–alanine 739. The Cytoplasmic portion of the chain corresponds to tyrosine 740–histidine 763. The chain crosses the membrane as a helical span at residues isoleucine 764–serine 784. Topologically, residues serine 785–lysine 798 are extracellular. Asparagine 788 and asparagine 797 each carry an N-linked (GlcNAc...) asparagine glycan. A helical membrane pass occupies residues serine 799 to phenylalanine 819. The Cytoplasmic segment spans residues asparagine 820 to histidine 902.

The protein belongs to the G-protein coupled receptor 1 family.

The protein localises to the cell membrane. The protein resides in the golgi apparatus. Its subcellular location is the trans-Golgi network membrane. Its function is as follows. Receptor for R-spondins that potentiates the canonical Wnt signaling pathway and acts as a stem cell marker of the intestinal epithelium and the hair follicle. Upon binding to R-spondins (RSPO1, RSPO2, RSPO3 or RSPO4), associates with phosphorylated LRP6 and frizzled receptors that are activated by extracellular Wnt receptors, triggering the canonical Wnt signaling pathway to increase expression of target genes. In contrast to classical G-protein coupled receptors, does not activate heterotrimeric G-proteins to transduce the signal. Involved in the development and/or maintenance of the adult intestinal stem cells during postembryonic development. The chain is Leucine-rich repeat-containing G-protein coupled receptor 5 (lgr5) from Xenopus tropicalis (Western clawed frog).